Consider the following 169-residue polypeptide: N-alpha-acetyltransferase 50 (169 aa).

The 150-residue stretch at 6–155 (IELGDVTPHN…DAHVLQKNLK (150 aa)) folds into the N-acetyltransferase domain. Phosphothreonine is present on Thr-12. Tyr-31 serves as a coordination point for substrate. N6-acetyllysine occurs at positions 34 and 37. Tyr-73 is an active-site residue. Met-75 lines the substrate pocket. 77–90 (LGCLAPYRRLGIGT) contributes to the acetyl-CoA binding site. Residue Tyr-110 is modified to Phosphotyrosine. His-112 is an active-site residue. A CoA-binding site is contributed by 117–126 (NESAIDFYRK). The interval 138-141 (YYKR) is substrate. Lys-140 is subject to N6-acetyllysine.

It belongs to the acetyltransferase family. GNAT subfamily. As to quaternary structure, component of the N-terminal acetyltransferase E (NatE) complex at least composed of NAA10, NAA15 and NAA50. Interacts with NAA10. Interacts with NAA15. Predominantly interacts with NAA15 in the N-terminal acetyltransferase A complex (NatA complex); the interactions reduce the acetylation activity of the NatA complex. Component of the N-terminal acetyltransferase E (NatE)/HYPK complex at least composed of NAA10, NAA15, NAA50 and HYPK. Within the complex interacts with NAA15. Its capacity to interact with the NatA complex is reduced by HYPK. Interacts with NAA35.

It localises to the cytoplasm. The protein localises to the nucleus. The enzyme catalyses N-terminal L-methionyl-L-alanyl-[protein] + acetyl-CoA = N-terminal N(alpha)-acetyl-L-methionyl-L-alanyl-[protein] + CoA + H(+). It catalyses the reaction N-terminal L-methionyl-L-seryl-[protein] + acetyl-CoA = N-terminal N(alpha)-acetyl-L-methionyl-L-seryl-[protein] + CoA + H(+). The catalysed reaction is N-terminal L-methionyl-L-valyl-[protein] + acetyl-CoA = N-terminal N(alpha)-acetyl-L-methionyl-L-valyl-[protein] + CoA + H(+). It carries out the reaction N-terminal L-methionyl-L-threonyl-[protein] + acetyl-CoA = N-terminal N(alpha)-acetyl-L-methionyl-L-threonyl-[protein] + CoA + H(+). The enzyme catalyses N-terminal L-methionyl-L-lysyl-[protein] + acetyl-CoA = N-terminal N(alpha)-acetyl-L-methionyl-L-lysyl-[protein] + CoA + H(+). It catalyses the reaction N-terminal L-methionyl-L-leucyl-[protein] + acetyl-CoA = N-terminal N(alpha)-acetyl-L-methionyl-L-leucyl-[protein] + CoA + H(+). The catalysed reaction is N-terminal L-methionyl-L-phenylalanyl-[protein] + acetyl-CoA = N-terminal N(alpha)-acetyl-L-methionyl-L-phenylalanyl-[protein] + CoA + H(+). It carries out the reaction N-terminal L-methionyl-L-tyrosyl-[protein] + acetyl-CoA = N-terminal N(alpha)-acetyl-L-methionyl-L-tyrosyl-[protein] + CoA + H(+). In terms of biological role, N-alpha-acetyltransferase that acetylates the N-terminus of proteins that retain their initiating methionine. Has a broad substrate specificity: able to acetylate the initiator methionine of most peptides, except for those with a proline in second position. Also displays N-epsilon-acetyltransferase activity by mediating acetylation of the side chain of specific lysines on proteins. Autoacetylates in vivo. The relevance of N-epsilon-acetyltransferase activity is however unclear: able to acetylate H4 in vitro, but this result has not been confirmed in vivo. Component of N-alpha-acetyltransferase complexes containing NAA10 and NAA15, which has N-alpha-acetyltransferase activity. Does not influence the acetyltransferase activity of NAA10. However, it negatively regulates the N-alpha-acetyltransferase activity of the N-terminal acetyltransferase A complex (also called the NatA complex). The multiprotein complexes probably constitute the major contributor for N-terminal acetylation at the ribosome exit tunnel, with NAA10 acetylating all amino termini that are devoid of methionine and NAA50 acetylating other peptides. Required for sister chromatid cohesion during mitosis by promoting binding of CDCA5/sororin to cohesin: may act by counteracting the function of NAA10. This is N-alpha-acetyltransferase 50 (NAA50) from Bos taurus (Bovine).